The following is a 76-amino-acid chain: UPF0346 protein LBUL_1194 (76 aa).

Belongs to the UPF0346 family.

In Lactobacillus delbrueckii subsp. bulgaricus (strain ATCC BAA-365 / Lb-18), this protein is UPF0346 protein LBUL_1194.